The sequence spans 83 residues: Small ribosomal subunit protein bS20 (83 aa).

This sequence belongs to the bacterial ribosomal protein bS20 family.

Functionally, binds directly to 16S ribosomal RNA. The chain is Small ribosomal subunit protein bS20 from Flavobacterium johnsoniae (strain ATCC 17061 / DSM 2064 / JCM 8514 / BCRC 14874 / CCUG 350202 / NBRC 14942 / NCIMB 11054 / UW101) (Cytophaga johnsonae).